Here is a 552-residue protein sequence, read N- to C-terminus: Lon protease 2 (552 aa).

97-104 provides a ligand contact to ATP; sequence GPPGVGKT. The Lon proteolytic domain occupies 349 to 535; it reads EPQVGIVNGL…QEVLDEILVN (187 aa). Catalysis depends on residues Ser445 and Lys488.

The protein belongs to the peptidase S16 family. As to quaternary structure, homohexamer. Organized in a ring with a central cavity.

Its subcellular location is the cytoplasm. It carries out the reaction Hydrolysis of proteins in presence of ATP.. ATP-dependent serine protease that mediates the selective degradation of mutant and abnormal proteins as well as certain short-lived regulatory proteins. Required for cellular homeostasis and for survival from DNA damage and developmental changes induced by stress. Degrades polypeptides processively to yield small peptide fragments that are 5 to 10 amino acids long. Binds to DNA in a double-stranded, site-specific manner. The chain is Lon protease 2 (lon2) from Bacillus subtilis (strain 168).